The sequence spans 83 residues: Omega-agatoxin-Aa4b (83 aa).

The signal sequence occupies residues 1–20 (MKLCMTLLITAIAVVTFVVA). A propeptide spanning residues 21 to 35 (TQEESAEFNEVEESR) is cleaved from the precursor. 4 cysteine pairs are disulfide-bonded: Cys39/Cys55, Cys47/Cys60, Cys54/Cys71, and Cys62/Cys69. Ser81 is subject to D-serine (Ser).

Belongs to the neurotoxin 02 (plectoxin) family. 03 (omega-agtx) subfamily. Post-translationally, the toxin with D-Ser (named omega-aga IVC) is 80-90 fold more potent than that with L-Ser (omega-aga IVB) against Cav2.1/CACNA1A (P-type) channels in rat cerebellar Purkinje neurons and is more resistant to proteases. The epimerization is done by the venom peptide isomerase heterodimer. As to expression, expressed by the venom gland.

The protein localises to the secreted. Antagonist of voltage-gated Cav2.1/CACNA1A (P-type) calcium channels. Paralyzes insect by blocking neuromuscular transmission. The protein is Omega-agatoxin-Aa4b of Agelenopsis aperta (North American funnel-web spider).